The following is a 338-amino-acid chain: D-erythrose-4-phosphate dehydrogenase (338 aa).

11-12 contacts NAD(+); that stretch reads RI. Substrate is bound by residues 153 to 155, Arg-199, 212 to 213, and Arg-235; these read SCT and TK. Cys-154 acts as the Nucleophile in catalysis. An NAD(+)-binding site is contributed by Asn-317.

The protein belongs to the glyceraldehyde-3-phosphate dehydrogenase family. Epd subfamily. As to quaternary structure, homotetramer.

Its subcellular location is the cytoplasm. It carries out the reaction D-erythrose 4-phosphate + NAD(+) + H2O = 4-phospho-D-erythronate + NADH + 2 H(+). It functions in the pathway cofactor biosynthesis; pyridoxine 5'-phosphate biosynthesis; pyridoxine 5'-phosphate from D-erythrose 4-phosphate: step 1/5. Catalyzes the NAD-dependent conversion of D-erythrose 4-phosphate to 4-phosphoerythronate. This chain is D-erythrose-4-phosphate dehydrogenase, found in Shewanella amazonensis (strain ATCC BAA-1098 / SB2B).